Consider the following 351-residue polypeptide: Photosystem II D2 protein (351 aa).

A helical membrane pass occupies residues 39-59 (CSYLALGGWLTGTTFVTSWYT). His116 provides a ligand contact to chlorophyll a. A helical transmembrane segment spans residues 123–139 (GFCLRQFEIARLVGIRP). Positions 128 and 141 each coordinate pheophytin a. Residues 151–164 (VFVSVFLMYPLGQA) traverse the membrane as a helical segment. Chlorophyll a is bound at residue His196. The chain crosses the membrane as a helical span at residues 206 to 226 (GALLCAIHGATVQNTLFEDGD). The a plastoquinone site is built by His213 and Phe260. His213 lines the Fe cation pocket. His267 is a binding site for Fe cation. The helical transmembrane segment at 277-293 (GLWTSAFGIVGLALNLR) threads the bilayer.

This sequence belongs to the reaction center PufL/M/PsbA/D family. In terms of assembly, PSII is composed of 1 copy each of membrane proteins PsbA, PsbB, PsbC, PsbD, PsbE, PsbF, PsbH, PsbI, PsbJ, PsbK, PsbL, PsbM, PsbT, PsbX, PsbY, PsbZ, Psb30/Ycf12, at least 3 peripheral proteins of the oxygen-evolving complex and a large number of cofactors. It forms dimeric complexes. The cofactor is The D1/D2 heterodimer binds P680, chlorophylls that are the primary electron donor of PSII, and subsequent electron acceptors. It shares a non-heme iron and each subunit binds pheophytin, quinone, additional chlorophylls, carotenoids and lipids. There is also a Cl(-1) ion associated with D1 and D2, which is required for oxygen evolution. The PSII complex binds additional chlorophylls, carotenoids and specific lipids..

The protein localises to the plastid. It localises to the chloroplast thylakoid membrane. The catalysed reaction is 2 a plastoquinone + 4 hnu + 2 H2O = 2 a plastoquinol + O2. In terms of biological role, photosystem II (PSII) is a light-driven water:plastoquinone oxidoreductase that uses light energy to abstract electrons from H(2)O, generating O(2) and a proton gradient subsequently used for ATP formation. It consists of a core antenna complex that captures photons, and an electron transfer chain that converts photonic excitation into a charge separation. The D1/D2 (PsbA/PsbD) reaction center heterodimer binds P680, the primary electron donor of PSII as well as several subsequent electron acceptors. D2 is needed for assembly of a stable PSII complex. The chain is Photosystem II D2 protein from Gracilaria tenuistipitata var. liui (Red alga).